We begin with the raw amino-acid sequence, 81 residues long: UPF0729 protein C18orf32 homolog (81 aa).

The span at 45 to 58 (AASDQKVSEKSNGT) shows a compositional bias: polar residues. Residues 45–81 (AASDQKVSEKSNGTCKPESNGEATANGSTIAADKKTD) are disordered.

It belongs to the UPF0729 family.

This Anoplopoma fimbria (Sablefish) protein is UPF0729 protein C18orf32 homolog.